We begin with the raw amino-acid sequence, 229 residues long: Probable coenzyme A transferase subunit alpha (229 aa).

26 to 32 (GGFGGVG) serves as a coordination point for CoA.

It belongs to the 3-oxoacid CoA-transferase subunit A family. As to quaternary structure, heterodimer of a subunit alpha and a subunit beta.

This Bacillus subtilis (strain 168) protein is Probable coenzyme A transferase subunit alpha (yodS).